The primary structure comprises 498 residues: 4-aminobutyrate aminotransferase (498 aa).

Residue 164 to 165 participates in pyridoxal 5'-phosphate binding; sequence GS. A substrate-binding site is contributed by Arg-222. Lys-356 carries the post-translational modification N6-(pyridoxal phosphate)lysine. Thr-381 provides a ligand contact to pyridoxal 5'-phosphate.

This sequence belongs to the class-III pyridoxal-phosphate-dependent aminotransferase family. As to quaternary structure, homodimer. Pyridoxal 5'-phosphate is required as a cofactor.

It localises to the cytoplasm. The enzyme catalyses 4-aminobutanoate + 2-oxoglutarate = succinate semialdehyde + L-glutamate. In terms of biological role, deaminates gamma-aminobutyric acid (GABA) to succinate-semialdehyde, which in turn is converted to succinate by the succinate semialdehyde dehydrogenase. Required for the degradation of GABA, which is important for utilization of GABA as nitrogen source. This is 4-aminobutyrate aminotransferase (gatA) from Emericella nidulans (strain FGSC A4 / ATCC 38163 / CBS 112.46 / NRRL 194 / M139) (Aspergillus nidulans).